The chain runs to 1522 residues: Paired amphipathic helix protein pst1 (1522 aa).

Residues 139–174 are disordered; that stretch reads TILSSTDSNIPRPGTVKSSASPFVPNQNPSAPPPPP. A PAH 1 domain is found at 178–248; the sequence is RQLNVTDALS…QGFNTFLPPG (71 aa). The disordered stretch occupies residues 307-339; it reads QSSASHPVLQPPAPSTLQFNPSPSPAAPSYPPV. A compositionally biased stretch (pro residues) spans 328 to 337; sequence SPSPAAPSYP. In terms of domain architecture, PAH 2 spans 345 to 415; it reads QAADLDQAIN…EEFKRFLPDV (71 aa). 3 disordered regions span residues 422-504, 928-968, and 1343-1522; these read ETQD…AFNV, AREN…DESS, and SGKA…KDDL. Over residues 426 to 441 the composition is skewed to polar residues; it reads KSTVVPQESATATPKR. Residue Ser-442 is modified to Phosphoserine. Residues 442–468 show a composition bias toward low complexity; it reads SPSATPTSALPPIGKFAPPTTAKAQPA. At Thr-446 the chain carries Phosphothreonine. Residues 504-576 form the PAH 3 domain; sequence VPIAQNKNPS…NWLKDLVKYN (73 aa). Residues 928-960 are compositionally biased toward basic and acidic residues; that stretch reads ARENRSSVKEDYVSESTERTPDASEIDEHISEH. Residues 1385 to 1398 show a composition bias toward polar residues; sequence GKSSVTRGNKTNLK. The segment covering 1403-1432 has biased composition (basic and acidic residues); that stretch reads RNNDDSSNKINLSEKEKEKESIEDEEKNRE. Position 1443 is a phosphoserine (Ser-1443). A compositionally biased stretch (basic and acidic residues) spans 1461–1474; the sequence is TSSHRPERSSEKKS. Over residues 1478–1487 the composition is skewed to polar residues; it reads VFTSVKQTAE. A compositionally biased stretch (acidic residues) spans 1488-1522; the sequence is NDADNEDDKTDMDDQTEETLDADNTMEEEPSKDDL.

The protein localises to the nucleus. In terms of biological role, has a role in modulating the nuclear import of TF1 virus-like particles. Essential for viability. The polypeptide is Paired amphipathic helix protein pst1 (pst1) (Schizosaccharomyces pombe (strain 972 / ATCC 24843) (Fission yeast)).